The primary structure comprises 927 residues: Sodium/calcium exchanger 3 (927 aa).

The N-terminal stretch at 1 to 30 (MAWLRLQPLTSAFLHFGLVTFVLFLNGLRA) is a signal peptide. Topologically, residues 31 to 73 (EAGGSGDVPSTGQNNESCSGSSDCKEGVILPIWYPENPSLGDK) are extracellular. Asn-45 is a glycosylation site (N-linked (GlcNAc...) asparagine). Residues 74 to 94 (IARVIVYFVALIYMFLGVSII) traverse the membrane as a helical segment. Over 95-147 (ADRFMASIEVITSQEREVTIKKPNGETSTTTIRVWNETVSNLTLMALGSSAPE) the chain is Cytoplasmic. One copy of the Alpha-1 repeat lies at 140 to 180 (ALGSSAPEILLSLIEVCGHGFIAGDLGPSTIVGSAAFNMFI). Residues 148 to 168 (ILLSLIEVCGHGFIAGDLGPS) traverse the membrane as a helical segment. Thr-169 is a topological domain (extracellular). Residues 170 to 190 (IVGSAAFNMFIIIGICVYVIP) form a helical membrane-spanning segment. Residues 191-202 (DGETRKIKHLRV) lie on the Cytoplasmic side of the membrane. Residues 203 to 223 (FFITAAWSIFAYIWLYMILAV) traverse the membrane as a helical segment. Topologically, residues 224-230 (FSPGVVQ) are extracellular. Residues 231–251 (VWEGLLTLFFFPVCVLLAWVA) traverse the membrane as a helical segment. Over 252–726 (DKRLLFYKYM…DESGEERLPS (475 aa)) the chain is Cytoplasmic. The segment at 253 to 272 (KRLLFYKYMHKKYRTDKHRG) is putative calmodulin-binding region. Calx-beta domains follow at residues 386–485 (VHTD…VRLS) and 519–619 (ATVT…IALG). The Ca(2+) site is built by Glu-409, Asp-445, Asp-470, Asp-471, Ile-473, Glu-475, Glu-478, Asp-525, Asp-526, Asp-527, Glu-543, Asp-579, Glu-606, Glu-607, and Glu-672. A helical transmembrane segment spans residues 727–747 (CFDYVMHFLTVFWKVLFACVP). Residues 748–754 (PTEYCHG) are Extracellular-facing. Residues 755-775 (WACFAVSILIIGMLTAIIGDL) traverse the membrane as a helical segment. Over 776–778 (ASH) the chain is Cytoplasmic. Residues 779-799 (FGCTIGLKDSVTAVVFVAFGT) traverse the membrane as a helical segment. Residues 796–832 (AFGTSVPDTFASKAAALQDVYADASIGNVTGSNAVNV) form an Alpha-2 repeat. The Extracellular portion of the chain corresponds to 800–828 (SVPDTFASKAAALQDVYADASIGNVTGSN). N-linked (GlcNAc...) asparagine glycosylation is present at Asn-823. The chain crosses the membrane as a helical span at residues 829–849 (AVNVFLGIGLAWSVAAIYWAL). Over 850-860 (QGQEFHVSAGT) the chain is Cytoplasmic. The chain crosses the membrane as a helical span at residues 861 to 881 (LAFSVTLFTIFAFVCISVLLY). Residues 882–903 (RRRPHLGGELGGPRGCKLATTW) lie on the Extracellular side of the membrane. The helical transmembrane segment at 904-924 (LFVSLWLLYILFATLEAYCYI) threads the bilayer. Over 925 to 927 (KGF) the chain is Cytoplasmic.

This sequence belongs to the Ca(2+):cation antiporter (CaCA) (TC 2.A.19) family. SLC8 subfamily. In terms of assembly, interacts with AKAP1. As to expression, isoform 2 is expressed in brain and skeletal muscle. Isoform 3 is expressed in excitable cells of brain, retina and skeletal muscle. Isoform 4 is expressed in skeletal muscle.

Its subcellular location is the cell membrane. The protein localises to the perikaryon. The protein resides in the cell projection. It localises to the dendrite. It is found in the dendritic spine. Its subcellular location is the sarcolemma. The protein localises to the cytoplasm. The protein resides in the sarcoplasm. It localises to the cell junction. It is found in the mitochondrion outer membrane. Its subcellular location is the perinuclear region. The protein localises to the endoplasmic reticulum membrane. It catalyses the reaction Ca(2+)(in) + 3 Na(+)(out) = Ca(2+)(out) + 3 Na(+)(in). Its activity is regulated as follows. Calcium transport is down-regulated by Na(+) and stimulated by Ca(2+). In terms of biological role, mediates the electrogenic exchange of Ca(2+) against Na(+) ions across the cell membrane, and thereby contributes to the regulation of cytoplasmic Ca(2+) levels and Ca(2+)-dependent cellular processes. Contributes to cellular Ca(2+) homeostasis in excitable cells, both in muscle and in brain. In a first phase, voltage-gated channels mediate the rapid increase of cytoplasmic Ca(2+) levels due to release of Ca(2+) stores from the endoplasmic reticulum. SLC8A3 mediates the export of Ca(2+) from the cell during the next phase, so that cytoplasmic Ca(2+) levels rapidly return to baseline. Contributes to Ca(2+) transport during excitation-contraction coupling in muscle. In neurons, contributes to the rapid decrease of cytoplasmic Ca(2+) levels back to baseline after neuronal activation, and thereby contributes to modulate synaptic plasticity, learning and memory. Required for normal oligodendrocyte differentiation and for normal myelination. Mediates Ca(2+) efflux from mitochondria and contributes to mitochondrial Ca(2+) ion homeostasis. The chain is Sodium/calcium exchanger 3 (SLC8A3) from Homo sapiens (Human).